Reading from the N-terminus, the 307-residue chain is ADP,ATP carrier protein 3 (307 aa).

3 Solcar repeats span residues 10-103 (TNFA…IKLM), 114-206 (KWFA…LKPL), and 214-300 (GSFL…LQMI). 5 helical membrane-spanning segments follow: residues 12-39 (FAIN…VKIL), 80-104 (TANV…KLMF), 112-132 (YGKW…LSLL), 182-203 (FMPS…FDSL), and 217-237 (LASF…SYPL). Residues R85 and K97 each contribute to the ADP site. R241 provides a ligand contact to ADP. Positions 241-246 (RRRMMM) are important for transport activity. A Nucleotide carrier signature motif motif is present at residues 241–246 (RRRMMM). Residues 277-297 (CGANILRSVAGAGVISMYDQL) traverse the membrane as a helical segment.

It belongs to the mitochondrial carrier (TC 2.A.29) family. As to quaternary structure, monomer.

The protein localises to the mitochondrion inner membrane. The catalysed reaction is ADP(in) + ATP(out) = ADP(out) + ATP(in). Its activity is regulated as follows. The matrix-open state (m-state) is inhibited by the membrane-permeable bongkrekic acid (BKA). The cytoplasmic-open state (c-state) is inhibited by the membrane-impermeable toxic inhibitor carboxyatractyloside (CATR). Its function is as follows. ADP:ATP antiporter that mediates import of ADP into the mitochondrial matrix for ATP synthesis, and export of ATP out to fuel the cell. Cycles between the cytoplasmic-open state (c-state) and the matrix-open state (m-state): operates by the alternating access mechanism with a single substrate-binding site intermittently exposed to either the cytosolic (c-state) or matrix (m-state) side of the inner mitochondrial membrane. This is ADP,ATP carrier protein 3 (AAC3) from Saccharomyces cerevisiae (strain ATCC 204508 / S288c) (Baker's yeast).